A 557-amino-acid polypeptide reads, in one-letter code: TGF-beta receptor type-2 (557 aa).

Residues 1–23 form the signal peptide; sequence MPPRLRPLLLRVSLWVLVGSSSP. Residues 24–155 lie on the Extracellular side of the membrane; that stretch reads ALLHDRSKEN…KPEEKDEISK (132 aa). Intrachain disulfides connect cysteine 41–cysteine 74, cysteine 44–cysteine 61, cysteine 51–cysteine 57, cysteine 67–cysteine 91, cysteine 111–cysteine 126, and cysteine 128–cysteine 133. Asparagine 62 and asparagine 84 each carry an N-linked (GlcNAc...) asparagine glycan. A helical transmembrane segment spans residues 156–176; the sequence is VTIISLVPLLVISVAVIVIFY. At 177–557 the chain is on the cytoplasmic side; the sequence is AYRTHKKRKL…PEDGSVTTAK (381 aa). The Protein kinase domain maps to 234-537; it reads IELDIVVGKG…FSEFKHHDKL (304 aa). Residues 240–248 and lysine 267 contribute to the ATP site; that span reads VGKGRFAEV. The active-site Proton acceptor is aspartate 369.

The protein belongs to the protein kinase superfamily. TKL Ser/Thr protein kinase family. TGFB receptor subfamily. In terms of assembly, heterohexamer; TGFB1, TGFB2 and TGFB3 homodimeric ligands assemble a functional receptor composed of two TGFBR1 and TGFBR2 heterodimers to form a ligand-receptor heterohexamer. Requires Mg(2+) as cofactor. The cofactor is Mn(2+). Post-translationally, phosphorylated on a Ser/Thr residue in the cytoplasmic domain. Detected at low levels in embryonic heart, brain and lung. Detected at high levels in hatchling heart and lung.

Its subcellular location is the cell membrane. It localises to the membrane raft. It catalyses the reaction L-threonyl-[receptor-protein] + ATP = O-phospho-L-threonyl-[receptor-protein] + ADP + H(+). The catalysed reaction is L-seryl-[receptor-protein] + ATP = O-phospho-L-seryl-[receptor-protein] + ADP + H(+). Transmembrane serine/threonine kinase forming with the TGF-beta type I serine/threonine kinase receptor, TGFBR1, the non-promiscuous receptor for the TGF-beta cytokines TGFB1, TGFB2 and TGFB3. Transduces the TGFB1, TGFB2 and TGFB3 signal from the cell surface to the cytoplasm and is thus regulating a plethora of physiological and pathological processes including cell cycle arrest in epithelial and hematopoietic cells, control of mesenchymal cell proliferation and differentiation, wound healing, extracellular matrix production, immunosuppression and carcinogenesis. The formation of the receptor complex composed of 2 TGFBR1 and 2 TGFBR2 molecules symmetrically bound to the cytokine dimer results in the phosphorylation and the activation of TGFRB1 by the constitutively active TGFBR2. Activated TGFBR1 phosphorylates SMAD2 which dissociates from the receptor and interacts with SMAD4. The SMAD2-SMAD4 complex is subsequently translocated to the nucleus where it modulates the transcription of the TGF-beta-regulated genes. This constitutes the canonical SMAD-dependent TGF-beta signaling cascade. Also involved in non-canonical, SMAD-independent TGF-beta signaling pathways. The sequence is that of TGF-beta receptor type-2 (TGFBR2) from Gallus gallus (Chicken).